The following is a 1450-amino-acid chain: Auxilin-like protein 1 (1450 aa).

Disordered stretches follow at residues 117–142 (NEDKKRNRRKGGNSSDVPLCNEGKKS), 241–318 (STRD…AESS), 357–383 (DSKIENKGNTKVEGITEESRDNNSQIL), 459–480 (NSKQQEPENLAPAKPEPDTKQE), 512–541 (SQKDEKQFTEKENSTVTQMVQDEESDSQEM), 556–575 (EETPQQTESKSEMNIEEKSE), 908–946 (DRSETDSNNSRERFDQTQEQAEETMIDGSIDTDTSRSSF), 961–1046 (EQHR…ELEH), 1077–1168 (GAAT…ERKQ), 1192–1241 (AGKT…AERA), and 1254–1328 (AMEK…SDRA). A coiled-coil region spans residues 316 to 344 (ESSAALKKAIEEAQIRMNIAKQMMEKKKS). The span at 357 to 366 (DSKIENKGNT) shows a compositional bias: basic and acidic residues. Composition is skewed to basic and acidic residues over residues 512 to 524 (SQKDEKQFTEKEN), 564 to 575 (SKSEMNIEEKSE), 908 to 923 (DRSETDSNNSRERFDQ), 1037 to 1046 (RNGDKKELEH), 1117 to 1131 (NMKENEGEESCRSSM), 1147 to 1168 (ETVEEHLKKIDETREKERERKQ), and 1192 to 1226 (AGKTAMEKAKAVAHRREVPRKSEKGSVEVNDKLSS). Coiled-coil stretches lie at residues 1142–1184 (SQNK…RERA) and 1219–1257 (EVNDKLSSAEKASMQAKLRAERAAVERAITEVRERAMEK). Low complexity predominate over residues 1270–1299 (SYGGSKSFSSSGERRGSSSSGTENKSSGPS). Positions 1310-1328 (PIQRCKARSERHQRTSDRA) are enriched in basic and acidic residues. Residues 1327-1355 (RAAEALAEKKLRDLKTQKEQTERNRLAEA) are a coiled coil. Positions 1377–1450 (TLQYILGAES…AWNKFGADER (74 aa)) constitute a J domain.

The chain is Auxilin-like protein 1 (AUL1) from Arabidopsis thaliana (Mouse-ear cress).